Here is a 240-residue protein sequence, read N- to C-terminus: Triosephosphate isomerase (240 aa).

6 to 8 (NLK) is a binding site for substrate. The active-site Electrophile is the His-88. Glu-157 acts as the Proton acceptor in catalysis. Residues Gly-163 and Ser-193 each coordinate substrate.

It belongs to the triosephosphate isomerase family. As to quaternary structure, homodimer.

It localises to the cytoplasm. The catalysed reaction is D-glyceraldehyde 3-phosphate = dihydroxyacetone phosphate. The protein operates within carbohydrate biosynthesis; gluconeogenesis. Its pathway is carbohydrate degradation; glycolysis; D-glyceraldehyde 3-phosphate from glycerone phosphate: step 1/1. Functionally, involved in the gluconeogenesis. Catalyzes stereospecifically the conversion of dihydroxyacetone phosphate (DHAP) to D-glyceraldehyde-3-phosphate (G3P). The sequence is that of Triosephosphate isomerase from Sulfurimonas denitrificans (strain ATCC 33889 / DSM 1251) (Thiomicrospira denitrificans (strain ATCC 33889 / DSM 1251)).